A 314-amino-acid polypeptide reads, in one-letter code: Ketimine reductase mu-crystallin (314 aa).

Arginine 47 is a binding site for 3,3',5-triiodo-L-thyronine. NADPH-binding residues include serine 91, histidine 92, arginine 119, alanine 144, valine 146, glutamine 147, asparagine 168, arginine 169, threonine 170, asparagine 173, threonine 205, methionine 206, and valine 226. Residue glutamate 257 coordinates 3,3',5-triiodo-L-thyronine. Position 292 (serine 292) interacts with NADPH.

The protein belongs to the ornithine cyclodeaminase/mu-crystallin family. Homodimer. Binds the thyroid hormone triiodothyronine (T3); T3 binding inhibits enzymatic activity. Expressed at high abundance in lens, but outside the lens it is preferentially expressed in neural tissues, retina and brain.

It is found in the cytoplasm. It catalyses the reaction L-pipecolate + NADP(+) = Delta(1)-piperideine-2-carboxylate + NADPH + H(+). The enzyme catalyses L-pipecolate + NAD(+) = Delta(1)-piperideine-2-carboxylate + NADH + H(+). The catalysed reaction is L-proline + NADP(+) = 1-pyrroline-2-carboxylate + NADPH + H(+). It carries out the reaction L-proline + NAD(+) = 1-pyrroline-2-carboxylate + NADH + H(+). It catalyses the reaction (3R)-1,4-thiomorpholine-3-carboxylate + NAD(+) = 3,4-dehydrothiomorpholine-3-carboxylate + NADH + 2 H(+). The enzyme catalyses (3R)-1,4-thiomorpholine-3-carboxylate + NADP(+) = 3,4-dehydrothiomorpholine-3-carboxylate + NADPH + 2 H(+). The catalysed reaction is (S)-cystathionine ketimine + NADH + 2 H(+) = (3R,5S)-2,3,5,6,7-pentahydro-1,4-thiazepine-3,5-dicarboxylate + NAD(+). It carries out the reaction (S)-cystathionine ketimine + NADPH + 2 H(+) = (3R,5S)-2,3,5,6,7-pentahydro-1,4-thiazepine-3,5-dicarboxylate + NADP(+). It catalyses the reaction (R)-lanthionine ketimine + NADPH + 2 H(+) = (3R,5R)-1,4-thiomorpholine-3,5-dicarboxylate + NADP(+). The enzyme catalyses Delta(2)-thiazoline-2-carboxylate + NADPH + 2 H(+) = L-thiazolidine-2-carboxylate + NADP(+). Functionally, catalyzes the NAD(P)H-dependent reduction of imine double bonds of a number of cyclic ketimine substrates, including sulfur-containing cyclic ketimines. Under physiological conditions, it efficiently catalyzes delta(1)-piperideine-2-carboxylate (P2C) and delta(1)-pyrroline-2-carboxylate (Pyr2C) reduction, suggesting a central role in lysine and glutamate metabolism. Additional substrates are delta(2)-thiazoline-2-carboxylate (T2C), 3,4-dehydrothiomorpholine-3-carboxylate (AECK), and (R)-lanthionine ketimine (LK) that is reduced at very low rate compared to other substrates. Also catalyzes the NAD(P)H-dependent reduction of (S)-cystathionine ketimine (CysK). This chain is Ketimine reductase mu-crystallin (CRYM), found in Macropus fuliginosus (Western gray kangaroo).